The primary structure comprises 137 residues: Small integral membrane protein 9 (137 aa).

Positions 1-23 (MKPLKLFCIGLLLCPLVCLLLET) are cleaved as a signal peptide. Topologically, residues 24–84 (APPPSALLTL…NHLSDFFKSS (61 aa)) are extracellular. Residues 85–105 (IPPAAIFALFVTTAIMRAAIV) traverse the membrane as a helical segment. The Cytoplasmic segment spans residues 106–137 (NKRLEEPHRQWTIDQRSSLEMQNMNLIKLFGG).

The protein localises to the cell membrane. The polypeptide is Small integral membrane protein 9 (Smim9) (Mus musculus (Mouse)).